Consider the following 354-residue polypeptide: Ornithine carbamoyltransferase, catabolic (354 aa).

Residues 67-70 (STRT), Gln94, Arg118, and 145-148 (HPTQ) each bind carbamoyl phosphate. Residues Asn177, Asp241, and 245–246 (SM) contribute to the L-ornithine site. Residues 284–285 (CL) and Arg329 each bind carbamoyl phosphate.

This sequence belongs to the aspartate/ornithine carbamoyltransferase superfamily. OTCase family.

It localises to the cytoplasm. The enzyme catalyses carbamoyl phosphate + L-ornithine = L-citrulline + phosphate + H(+). It functions in the pathway amino-acid degradation; L-arginine degradation via ADI pathway; carbamoyl phosphate from L-arginine: step 2/2. Its function is as follows. Reversibly catalyzes the transfer of the carbamoyl group from carbamoyl phosphate (CP) to the N(epsilon) atom of ornithine (ORN) to produce L-citrulline. This chain is Ornithine carbamoyltransferase, catabolic (arcB), found in Lactococcus lactis subsp. lactis (strain IL1403) (Streptococcus lactis).